The sequence spans 338 residues: 1-aminocyclopropane-1-carboxylate deaminase (338 aa).

At Lys-51 the chain carries N6-(pyridoxal phosphate)lysine. Residue Ser-78 is the Nucleophile of the active site.

The protein belongs to the ACC deaminase/D-cysteine desulfhydrase family. Homotrimer. The cofactor is pyridoxal 5'-phosphate.

The enzyme catalyses 1-aminocyclopropane-1-carboxylate + H2O = 2-oxobutanoate + NH4(+). Its function is as follows. Catalyzes a cyclopropane ring-opening reaction, the irreversible conversion of 1-aminocyclopropane-1-carboxylate (ACC) to ammonia and alpha-ketobutyrate. Allows growth on ACC as a nitrogen source. The protein is 1-aminocyclopropane-1-carboxylate deaminase of Burkholderia cenocepacia (strain HI2424).